Reading from the N-terminus, the 487-residue chain is Aspartyl/glutamyl-tRNA(Asn/Gln) amidotransferase subunit B (487 aa).

This sequence belongs to the GatB/GatE family. GatB subfamily. Heterotrimer of A, B and C subunits.

It carries out the reaction L-glutamyl-tRNA(Gln) + L-glutamine + ATP + H2O = L-glutaminyl-tRNA(Gln) + L-glutamate + ADP + phosphate + H(+). It catalyses the reaction L-aspartyl-tRNA(Asn) + L-glutamine + ATP + H2O = L-asparaginyl-tRNA(Asn) + L-glutamate + ADP + phosphate + 2 H(+). Its function is as follows. Allows the formation of correctly charged Asn-tRNA(Asn) or Gln-tRNA(Gln) through the transamidation of misacylated Asp-tRNA(Asn) or Glu-tRNA(Gln) in organisms which lack either or both of asparaginyl-tRNA or glutaminyl-tRNA synthetases. The reaction takes place in the presence of glutamine and ATP through an activated phospho-Asp-tRNA(Asn) or phospho-Glu-tRNA(Gln). The chain is Aspartyl/glutamyl-tRNA(Asn/Gln) amidotransferase subunit B from Chlamydia abortus (strain DSM 27085 / S26/3) (Chlamydophila abortus).